A 273-amino-acid chain; its full sequence is Homeobox protein HMX2 (273 aa).

Residues M1–T152 form a disordered region. The segment covering K93 to G102 has biased composition (gly residues). A compositionally biased stretch (basic and acidic residues) spans S114 to L123. A DNA-binding region (homeobox) is located at residues K149–L208.

This sequence belongs to the HMX homeobox family.

It is found in the nucleus. In terms of biological role, transcription factor involved in specification of neuronal cell types and which is required for inner ear and hypothalamus development. This Homo sapiens (Human) protein is Homeobox protein HMX2 (HMX2).